A 347-amino-acid polypeptide reads, in one-letter code: NADH-ubiquinone oxidoreductase chain 2 (347 aa).

Transmembrane regions (helical) follow at residues 1–21 (MNPL…MMVV), 25–45 (HWLL…PIMM), 59–79 (YLLT…INLM), 96–116 (TLMT…FWVP), 122–142 (IPLT…LSIL), 149–169 (INLH…GWGG), 178–198 (IMAY…LYNP), 200–220 (LTLL…MLFI), 237–257 (MPVI…LPPL), 274–294 (DMLI…YFYM), and 325–345 (LLPT…MLSI).

It belongs to the complex I subunit 2 family. Core subunit of respiratory chain NADH dehydrogenase (Complex I) which is composed of 45 different subunits. Interacts with TMEM242.

Its subcellular location is the mitochondrion inner membrane. The enzyme catalyses a ubiquinone + NADH + 5 H(+)(in) = a ubiquinol + NAD(+) + 4 H(+)(out). Functionally, core subunit of the mitochondrial membrane respiratory chain NADH dehydrogenase (Complex I) which catalyzes electron transfer from NADH through the respiratory chain, using ubiquinone as an electron acceptor. Essential for the catalytic activity and assembly of complex I. The protein is NADH-ubiquinone oxidoreductase chain 2 of Balaenoptera physalus (Fin whale).